The chain runs to 430 residues: Endo-beta-1,4-glucanase celB (430 aa).

Positions 1 to 16 (MALLLSLSLLATTISA) are cleaved as a signal peptide. N43 and N153 each carry an N-linked (GlcNAc...) asparagine glycan. E216 (nucleophile) is an active-site residue. The active-site Proton donor is the E221. N-linked (GlcNAc...) asparagine glycosylation is present at N395.

The protein belongs to the glycosyl hydrolase 7 (cellulase C) family.

It is found in the secreted. It carries out the reaction Endohydrolysis of (1-&gt;4)-beta-D-glucosidic linkages in cellulose, lichenin and cereal beta-D-glucans.. Its function is as follows. Has endoglucanase activity on substrates containing beta-1,4 glycosidic bonds, like in carboxymethylcellulose (CMC), hydroxyethylcellulose (HEC) and beta-glucan. Involved in the degradation of complex natural cellulosic substrates. In Emericella nidulans (strain FGSC A4 / ATCC 38163 / CBS 112.46 / NRRL 194 / M139) (Aspergillus nidulans), this protein is Endo-beta-1,4-glucanase celB (celB).